The following is a 153-amino-acid chain: 3-hydroxyacyl-[acyl-carrier-protein] dehydratase FabZ (153 aa).

The active site involves His57.

Belongs to the thioester dehydratase family. FabZ subfamily.

It localises to the cytoplasm. It carries out the reaction a (3R)-hydroxyacyl-[ACP] = a (2E)-enoyl-[ACP] + H2O. In terms of biological role, involved in unsaturated fatty acids biosynthesis. Catalyzes the dehydration of short chain beta-hydroxyacyl-ACPs and long chain saturated and unsaturated beta-hydroxyacyl-ACPs. In Xanthomonas oryzae pv. oryzae (strain MAFF 311018), this protein is 3-hydroxyacyl-[acyl-carrier-protein] dehydratase FabZ.